Consider the following 275-residue polypeptide: Erythroagglutinating phytohemagglutinin (275 aa).

The first 21 residues, 1–21, serve as a signal peptide directing secretion; the sequence is MASSNLLSLALFLVLLTHANS. Asn33 is a glycosylation site (N-linked (GlcNAc...) (high mannose) asparagine). Residues Asn81 and Asn101 are each glycosylated (N-linked (GlcNAc...) asparagine).

Belongs to the leguminous lectin family.

This insecticidal carbohydrate-binding lectin is toxic for the cowpea weevil. In Phaseolus vulgaris (Kidney bean), this protein is Erythroagglutinating phytohemagglutinin (DLEC1).